We begin with the raw amino-acid sequence, 200 residues long: Mediator of RNA polymerase II transcription subunit 22 (200 aa).

Positions 93–123 (SVNDAISLQNQQLRSLQEECDKKLISLRDEI) form a coiled coil. The tract at residues 159-200 (ASPSSSSSSTQGDQEEVEILPSQETEPQHHLNGQGTSSLEKM) is disordered. Polar residues predominate over residues 189–200 (LNGQGTSSLEKM).

It belongs to the Mediator complex subunit 22 family. In terms of assembly, component of the Mediator complex.

It is found in the nucleus. In terms of biological role, component of the Mediator complex, a coactivator involved in the regulated transcription of nearly all RNA polymerase II-dependent genes. Mediator functions as a bridge to convey information from gene-specific regulatory proteins to the basal RNA polymerase II transcription machinery. Mediator is recruited to promoters by direct interactions with regulatory proteins and serves as a scaffold for the assembly of a functional preinitiation complex with RNA polymerase II and the general transcription factors. This is Mediator of RNA polymerase II transcription subunit 22 (med22) from Takifugu rubripes (Japanese pufferfish).